Reading from the N-terminus, the 71-residue chain is Large ribosomal subunit protein bL31 (71 aa).

This sequence belongs to the bacterial ribosomal protein bL31 family. Type A subfamily. Part of the 50S ribosomal subunit.

In terms of biological role, binds the 23S rRNA. The chain is Large ribosomal subunit protein bL31 (rpmE) from Mycoplasmopsis synoviae (strain 53) (Mycoplasma synoviae).